Reading from the N-terminus, the 835-residue chain is Protein translocase subunit SecA (835 aa).

ATP-binding positions include Gln85, 103–107, and Asp492; that span reads GEGKT. Residues Cys819, Cys821, Cys830, and Cys831 each contribute to the Zn(2+) site.

It belongs to the SecA family. As to quaternary structure, monomer and homodimer. Part of the essential Sec protein translocation apparatus which comprises SecA, SecYEG and auxiliary proteins SecDF. Other proteins may also be involved. It depends on Zn(2+) as a cofactor.

It is found in the cell membrane. Its subcellular location is the cytoplasm. It carries out the reaction ATP + H2O + cellular proteinSide 1 = ADP + phosphate + cellular proteinSide 2.. Part of the Sec protein translocase complex. Interacts with the SecYEG preprotein conducting channel. Has a central role in coupling the hydrolysis of ATP to the transfer of proteins into and across the cell membrane, serving as an ATP-driven molecular motor driving the stepwise translocation of polypeptide chains across the membrane. This Clostridium botulinum (strain Kyoto / Type A2) protein is Protein translocase subunit SecA.